A 193-amino-acid polypeptide reads, in one-letter code: Dihydrofolate reductase (193 aa).

Positions 1 to 193 constitute a DHFR domain; the sequence is MIKLVFRYSP…VTTLTESVYK (193 aa). Residues arginine 7, 22 to 27, 52 to 55, and 73 to 77 contribute to the NADP(+) site; these read FGLGDG, GAKT, and DLARD.

This sequence belongs to the dihydrofolate reductase family.

It carries out the reaction (6S)-5,6,7,8-tetrahydrofolate + NADP(+) = 7,8-dihydrofolate + NADPH + H(+). The protein operates within cofactor biosynthesis; tetrahydrofolate biosynthesis; 5,6,7,8-tetrahydrofolate from 7,8-dihydrofolate: step 1/1. Key enzyme in folate metabolism. Catalyzes an essential reaction for de novo glycine and purine synthesis, and for DNA precursor synthesis. This chain is Dihydrofolate reductase (frd), found in Escherichia coli (Bacteriophage T4).